A 160-amino-acid polypeptide reads, in one-letter code: SsrA-binding protein (160 aa).

It belongs to the SmpB family.

Its subcellular location is the cytoplasm. In terms of biological role, required for rescue of stalled ribosomes mediated by trans-translation. Binds to transfer-messenger RNA (tmRNA), required for stable association of tmRNA with ribosomes. tmRNA and SmpB together mimic tRNA shape, replacing the anticodon stem-loop with SmpB. tmRNA is encoded by the ssrA gene; the 2 termini fold to resemble tRNA(Ala) and it encodes a 'tag peptide', a short internal open reading frame. During trans-translation Ala-aminoacylated tmRNA acts like a tRNA, entering the A-site of stalled ribosomes, displacing the stalled mRNA. The ribosome then switches to translate the ORF on the tmRNA; the nascent peptide is terminated with the 'tag peptide' encoded by the tmRNA and targeted for degradation. The ribosome is freed to recommence translation, which seems to be the essential function of trans-translation. The sequence is that of SsrA-binding protein from Pectobacterium carotovorum subsp. carotovorum (strain PC1).